The chain runs to 358 residues: Feruloyl esterase B (358 aa).

Residues 1–18 (MAIPLVLLLAWLLPTVFA) form the signal peptide. The catalytic stretch occupies residues 19 to 291 (ASLTQVSNFG…VSVVLDWFGI (273 aa)). The active-site Charge relay system is S136. N179 and N246 each carry an N-linked (GlcNAc...) asparagine glycan. Residues 292–321 (TGGGGGNGGGSGSTTTTTSATTTSTGPTGG) are gly/Thr-rich linker. The segment at 297-318 (GNGGGSGSTTTTTSATTTSTGP) is disordered. Over residues 304-318 (STTTTTSATTTSTGP) the composition is skewed to low complexity. Residues 322–358 (CTAAHWDQCGGNGYTGCTSCASPYTCQKVNDYYSQCL) form the CBM1 domain.

It belongs to the carbohydrate esterase 1 (CE1) family. Feruloyl esterase type B subfamily.

It localises to the secreted. It carries out the reaction feruloyl-polysaccharide + H2O = ferulate + polysaccharide.. In terms of biological role, involved in degradation of plant cell walls. Hydrolyzes the feruloyl-arabinose ester bond in arabinoxylans as well as the feruloyl-galactose and feruloyl-arabinose ester bonds in pectin. Active against methyl esters of caffeate (MCA), but not sinapate (MSA). The chain is Feruloyl esterase B (faeB) from Talaromyces stipitatus (strain ATCC 10500 / CBS 375.48 / QM 6759 / NRRL 1006) (Penicillium stipitatum).